Here is a 719-residue protein sequence, read N- to C-terminus: Solute carrier family 15 member 2 (719 aa).

Over 1–43 (MGKMKDKDVDAEKYEKAQRSPKLCGTNYPVSIAFIVVNEFCER) the chain is Cytoplasmic. A helical transmembrane segment spans residues 44–61 (FSYYGMKAVLTLYFMNYL). Residues 62-69 (HWDKNLST) are Extracellular-facing. An N-linked (GlcNAc...) asparagine glycan is attached at Asn-66. Residues 70 to 90 (AIYHAFSGLCYFTPLLGALIA) traverse the membrane as a helical segment. Topologically, residues 91 to 99 (DSWLGKFKT) are cytoplasmic. A helical transmembrane segment spans residues 100–120 (IIYLSIVYVIGHVVKSVGAIP). Topologically, residues 121–125 (DVGDS) are extracellular. Residues 126–146 (TVHIALSMVGLGLIALGTGGI) traverse the membrane as a helical segment. Over 147–169 (KPCVAAFGGDQFDEDNIDERRKF) the chain is Cytoplasmic. Residues 170 to 190 (FSIFYMSINAGSVLSTIITPI) traverse the membrane as a helical segment. The Extracellular portion of the chain corresponds to 191-201 (LRGDVQCFGGD). A helical transmembrane segment spans residues 202-222 (CYALAFGVPAALMVIALVVFI). The Cytoplasmic portion of the chain corresponds to 223-280 (SGSGLYKKSPPEGNVLVRVCKCIGFAISNRWTNSKKSPKRSHWLDWAEEKYSKRLIQE). The chain crosses the membrane as a helical span at residues 281-301 (IKMVCRVLVLYIPLPMFWALF). Residues 302-334 (DQQGSRWTLQATRMNMDFGGGFIIKPDQMQMLN) are Extracellular-facing. The helical transmembrane segment at 335 to 355 (ALLILVFIPIFDMGIYPLVGL) threads the bilayer. Residues 356-367 (CRIKLTPLKKMA) are Cytoplasmic-facing. The helical transmembrane segment at 368–388 (TGMILAALAFCAATAVEVYVI) threads the bilayer. Residues 389–594 (KTVVEPPPAK…QANNIHIGWQ (206 aa)) are Extracellular-facing. The tract at residues 389-594 (KTVVEPPPAK…QANNIHIGWQ (206 aa)) is extracellular domain (ECD). Asn-481, Asn-513, and Asn-532 each carry an N-linked (GlcNAc...) asparagine glycan. A helical membrane pass occupies residues 595–615 (IPQYVFLTAGEVMFSITGLEF). At 616 to 626 (SYSQAPASMKS) the chain is on the cytoplasmic side. The helical transmembrane segment at 627–647 (VLQAGWLMTVAFGNVIVLIVA) threads the bilayer. Over 648–657 (EGAGMEQWVE) the chain is Extracellular. Residues 658-678 (FLLFAALLVAVSIIFSIMAYF) form a helical membrane-spanning segment. Over 679-719 (YTYVDPDQLDKLFKEDGDGGKVESSKKDELSLGDMPKQTKM) the chain is Cytoplasmic. Residues 695–708 (GDGGKVESSKKDEL) are compositionally biased toward basic and acidic residues. The tract at residues 695 to 719 (GDGGKVESSKKDELSLGDMPKQTKM) is disordered.

It belongs to the major facilitator superfamily. Proton-dependent oligopeptide transporter (POT/PTR) (TC 2.A.17) family. In terms of tissue distribution, expressed in kidney, brain and gut. Also expressed weakly in eye, gill and skeletal muscle.

The protein localises to the apical cell membrane. Its subcellular location is the cytoplasmic vesicle. The protein resides in the phagosome membrane. It is found in the cell membrane. The enzyme catalyses a dipeptide(out) + 2 H(+)(out) = a dipeptide(in) + 2 H(+)(in). The catalysed reaction is N-acetyl-D-muramoyl-L-alanyl-D-isoglutamine(out) + 3 H(+)(out) = N-acetyl-D-muramoyl-L-alanyl-D-isoglutamine(in) + 3 H(+)(in). It catalyses the reaction glycyl-L-leucine(out) + 2 H(+)(out) = glycyl-L-leucine(in) + 2 H(+)(in). It carries out the reaction glycyl-L-lysine(out) + 2 H(+)(out) = glycyl-L-lysine(in) + 2 H(+)(in). The enzyme catalyses glycyl-L-glutamate(out) + 3 H(+)(out) = glycyl-L-glutamate(in) + 3 H(+)(in). The catalysed reaction is L-alanyl-L-alanine(out) + 2 H(+)(out) = L-alanyl-L-alanine(in) + 2 H(+)(in). It catalyses the reaction an L-amino acid tripeptide(out) + 2 H(+)(out) = an L-amino acid tripeptide(in) + 2 H(+)(in). It carries out the reaction carnosine(out) + 2 H(+)(out) = carnosine(in) + 2 H(+)(in). In terms of biological role, proton-coupled amino-acid transporter that transports oligopeptides of 2 to 4 amino acids with a preference for dipeptides. Transports neutral and anionic dipeptides with a proton to peptide stoichiometry of 2:1 or 3:1. The protein is Solute carrier family 15 member 2 of Danio rerio (Zebrafish).